A 139-amino-acid polypeptide reads, in one-letter code: uncharacterized protein (139 aa).

A Globin domain is found at 1–133; that stretch reads MLSEETIRVI…LAKTLITLEK (133 aa).

It belongs to the globin family.

This is an uncharacterized protein from Aquifex aeolicus (strain VF5).